Reading from the N-terminus, the 230-residue chain is uncharacterized protein (230 aa).

Residues Glu74, Glu76, and Asp105 each coordinate a divalent metal cation.

Belongs to the FAH family.

This is an uncharacterized protein from Pyrococcus horikoshii (strain ATCC 700860 / DSM 12428 / JCM 9974 / NBRC 100139 / OT-3).